A 452-amino-acid polypeptide reads, in one-letter code: Activating transcription factor 7-interacting protein 2 (452 aa).

Residue Ser-184 is modified to Phosphoserine. The interval 185 to 206 is disordered; the sequence is RSKRISSVNHTPLNSSEKAGRK. Phosphoserine is present on Ser-257. The Fibronectin type-III domain occupies 346–450; sequence PPQKPELKVK…IKSIPRFSEN (105 aa).

The protein belongs to the MCAF family. As to quaternary structure, interacts with MBD1, SETDB1 and SP1. Probably forms a complex with SETDB1 and MBD1. As to expression, expressed in testis.

The protein localises to the nucleus. Recruiter that couples transcriptional factors to general transcription apparatus and thereby modulates transcription regulation and chromatin formation. Can both act as an activator or a repressor depending on the context. Mediates MBD1-dependent transcriptional repression, probably by recruiting complexes containing SETDB1. The complex formed with MBD1 and SETDB1 represses transcription and probably couples DNA methylation and histone H3 'Lys-9' trimethylation (H3K9me3) activity. The chain is Activating transcription factor 7-interacting protein 2 (Atf7ip2) from Mus musculus (Mouse).